The primary structure comprises 734 residues: Serine protease FAM111B (734 aa).

Methionine 1 bears the N-acetylmethionine mark. 2 stretches are compositionally biased toward basic and acidic residues: residues 1 to 10 (MNSMKTEENK) and 17 to 32 (DDQRTRPEVSKDTVMK). Positions 1 to 32 (MNSMKTEENKSFSAMEDDQRTRPEVSKDTVMK) are disordered. Lysine 284 is covalently cross-linked (Glycyl lysine isopeptide (Lys-Gly) (interchain with G-Cter in SUMO2)). A disordered region spans residues 285–321 (QNESATDEINHQSLIQSKKKVHKPKKDGETKDVEHSR). Residues 310–321 (KDGETKDVEHSR) are compositionally biased toward basic and acidic residues. Active-site charge relay system residues include histidine 490, aspartate 544, and serine 650. The interval 712 to 734 (TYDEEKGKQESSLQDHQIEPMEC) is disordered.

This sequence belongs to the FAM111 family. Widely expressed.

In terms of biological role, serine protease. This Homo sapiens (Human) protein is Serine protease FAM111B.